A 150-amino-acid polypeptide reads, in one-letter code: uncharacterized protein (150 aa).

The protein localises to the plastid. It is found in the chloroplast. This is an uncharacterized protein from Pyropia yezoensis (Susabi-nori).